Here is a 1243-residue protein sequence, read N- to C-terminus: Zinc finger protein ZFAT (1243 aa).

The C2H2-type 1 zinc-finger motif lies at Phe12–His35. Disordered regions lie at residues Pro51–Leu116 and Gly147–Ala189. The segment covering Met70–Thr81 has biased composition (basic residues). The C2H2-type 2; degenerate zinc-finger motif lies at Leu116–Asn141. The span at Glu156–Ala189 shows a compositional bias: basic and acidic residues. 7 C2H2-type zinc fingers span residues Phe271–His293, Tyr299–His321, Phe326–His349, Gln354–His377, Tyr404–His426, Phe432–His454, and Tyr458–His481. Zn(2+)-binding residues include Cys273, Cys276, His289, His293, Cys301, Cys304, His317, His321, Cys328, Cys331, His344, His349, Cys356, Cys359, His372, His377, Cys406, Cys409, His422, and His426. Cys460, Cys463, His476, and His481 together coordinate Zn(2+). 3 disordered regions span residues Glu534 to Thr570, Thr603 to Gln625, and Ala638 to Ala705. Residues Ala610 to His620 show a composition bias toward basic and acidic residues. Positions Ala638–Ala650 are enriched in polar residues. 10 consecutive C2H2-type zinc fingers follow at residues Leu742 to His764, Tyr770 to His793, Leu798 to His822, Tyr830 to His853, Met880 to His903, Phe909 to His931, His937 to His959, Phe966 to His988, Phe994 to His1017, and Leu1041 to His1064. Residues Cys772, Cys775, His788, His793, Cys800, Cys805, His818, His822, Cys832, Cys835, His848, His853, Cys882, Cys885, His899, His903, Cys911, Cys914, His927, His931, Cys939, Cys942, His955, and Leu958 each contribute to the Zn(2+) site.

As to expression, isoform 1 is strongly expressed in placenta, spleen, kidney, testis and peripheral blood leukocytes. Expressed in CD4+ and CD8+ T-cells, CD19+ B-cells and CB14+ monocytes. Isoform 3 is strongly expressed in placenta, ovary, tonsil, CD19+ B-cells and CD14+ monocytes.

It localises to the nucleus. It is found in the cytoplasm. The protein resides in the cytosol. In terms of biological role, may be involved in transcriptional regulation. Overexpression causes down-regulation of a number of genes involved in the immune response. Some genes are also up-regulated. This Homo sapiens (Human) protein is Zinc finger protein ZFAT (ZFAT).